A 170-amino-acid polypeptide reads, in one-letter code: Odorant-binding protein 2a (170 aa).

The N-terminal stretch at 1–15 is a signal peptide; sequence MKTLFLGVTLGLAAA. Residues Cys74 and Cys166 are joined by a disulfide bond.

Belongs to the calycin superfamily. Lipocalin family. Monomer. As to expression, strongly expressed in the nasal structures, salivary and lachrymal glands, and lung. Expressed in the liver.

Its subcellular location is the secreted. Its function is as follows. Binds and transports small hydrophobic volatile molecules with a higher affinity for aldehydes and large fatty acids, including undecanal, palmitic acid, efficient aldehydes, benzenic aldehydes, heterocyclic aldehydes and aliphatic acids. The protein is Odorant-binding protein 2a (OBP2A) of Homo sapiens (Human).